The following is a 513-amino-acid chain: Glycogen synthase (513 aa).

Residue lysine 47 participates in ADP-alpha-D-glucose binding.

The protein belongs to the glycosyltransferase 1 family. Bacterial/plant glycogen synthase subfamily.

It catalyses the reaction [(1-&gt;4)-alpha-D-glucosyl](n) + ADP-alpha-D-glucose = [(1-&gt;4)-alpha-D-glucosyl](n+1) + ADP + H(+). The protein operates within glycan biosynthesis; glycogen biosynthesis. Functionally, synthesizes alpha-1,4-glucan chains using ADP-glucose. The sequence is that of Glycogen synthase from Pseudomonas paraeruginosa (strain DSM 24068 / PA7) (Pseudomonas aeruginosa (strain PA7)).